Reading from the N-terminus, the 543-residue chain is Chaperonin GroEL (543 aa).

Residues 29-32 (TLGP), 86-90 (DGTTT), G413, 478-480 (NAA), and D494 contribute to the ATP site.

The protein belongs to the chaperonin (HSP60) family. In terms of assembly, forms a cylinder of 14 subunits composed of two heptameric rings stacked back-to-back. Interacts with the co-chaperonin GroES.

The protein resides in the cytoplasm. It catalyses the reaction ATP + H2O + a folded polypeptide = ADP + phosphate + an unfolded polypeptide.. Functionally, together with its co-chaperonin GroES, plays an essential role in assisting protein folding. The GroEL-GroES system forms a nano-cage that allows encapsulation of the non-native substrate proteins and provides a physical environment optimized to promote and accelerate protein folding. In Lactobacillus gasseri (strain ATCC 33323 / DSM 20243 / BCRC 14619 / CIP 102991 / JCM 1131 / KCTC 3163 / NCIMB 11718 / NCTC 13722 / AM63), this protein is Chaperonin GroEL.